Here is a 571-residue protein sequence, read N- to C-terminus: Alpha-1D adrenergic receptor (571 aa).

Over 1–94 (MTFRDLLSVN…AVGGLVVSAQ (94 aa)) the chain is Extracellular. The tract at residues 13–75 (GSRSDGSAGG…SSAGEPGAAG (63 aa)) is disordered. Gly residues predominate over residues 19–34 (SAGGASAGGSGGGSGG). Residues 35-47 (AAASEGRAVDGVP) show a composition bias toward low complexity. Residues 48–57 (GTAGSGGVVG) are compositionally biased toward gly residues. N-linked (GlcNAc...) asparagine glycans are attached at residues N64 and N81. Residues 95-120 (GVGVGVFLAAFILMAVAGNLLVILSV) traverse the membrane as a helical segment. At 121 to 132 (ACNRHLQTVTNY) the chain is on the cytoplasmic side. The helical transmembrane segment at 133-158 (FIVNLAVADLLLSATVLPFSATMEVL) threads the bilayer. Residues 159–168 (GFWAFGRAFC) lie on the Extracellular side of the membrane. Residues 169 to 191 (DVWAAVDVLCCTASILSLCTISV) traverse the membrane as a helical segment. Topologically, residues 192–212 (DRYVGVRHSLKYPSIMTERKA) are cytoplasmic. Residues 213-237 (AAILALLWAVAIVVSVGPLLGWKEP) traverse the membrane as a helical segment. At 238-250 (VPPDERFCGITEE) the chain is on the extracellular side. Residues 251–274 (AGYAVFSSLCSFYLPMAVIVVMYC) traverse the membrane as a helical segment. The Cytoplasmic portion of the chain corresponds to 275–348 (RVYVVARSTT…KFSREKKAAK (74 aa)). Residues 349–373 (TLAIVVGVFVLCWFPFFFVLPLGSL) form a helical membrane-spanning segment. Topologically, residues 374 to 380 (FPQLKPS) are extracellular. The chain crosses the membrane as a helical span at residues 381–405 (EGVFKVIFWLGYFNSCVNPLIYPCS). The Cytoplasmic segment spans residues 406-571 (SREFKRAFLR…DYSHLRETDI (166 aa)). A lipid anchor (S-palmitoyl cysteine) is attached at C419. The interval 465 to 487 (LPAPEATDTPSAPEAQAPVVGRR) is disordered.

Belongs to the G-protein coupled receptor 1 family. Adrenergic receptor subfamily. ADRA1D sub-subfamily. As to quaternary structure, interacts with FLNA (via filamin repeat 21); increases PKA-mediated phosphorylation of FLNA. Post-translationally, palmitoylated. Palmitoylation by ZDHHC21 may increase the expression of the receptor and regulate downstream signaling.

It localises to the cell membrane. This alpha-adrenergic receptor mediates its effect through the influx of extracellular calcium. The chain is Alpha-1D adrenergic receptor (ADRA1D) from Sus scrofa (Pig).